An 845-amino-acid chain; its full sequence is Protein arginine N-methyltransferase 9 (845 aa).

TPR repeat units lie at residues valine 25 to leucine 58, glutamine 67 to aspartate 100, and glutamate 101 to phenylalanine 134. 2 SAM-dependent MTase PRMT-type domains span residues alanine 137–isoleucine 466 and asparagine 530–glutamine 845.

It belongs to the class I-like SAM-binding methyltransferase superfamily. Protein arginine N-methyltransferase family. In terms of assembly, found in a complex with PRMT9, SF3B2 and SF3B4. Interacts with SF3B2.

Its subcellular location is the cytoplasm. It carries out the reaction L-arginyl-[protein] + 2 S-adenosyl-L-methionine = N(omega),N(omega)'-dimethyl-L-arginyl-[protein] + 2 S-adenosyl-L-homocysteine + 2 H(+). Arginine methyltransferase that can both catalyze the formation of omega-N monomethylarginine (MMA) and symmetrical dimethylarginine (sDMA). Specifically mediates the symmetrical dimethylation of SF3B2. Involved in the regulation of alternative splicing of pre-mRNA. The sequence is that of Protein arginine N-methyltransferase 9 from Homo sapiens (Human).